The primary structure comprises 1363 residues: SKRRDMTVFSGLFLGGLPPELRSATLKLTLSSVKDREPFKGWITDVRVNYTQTSPVESQEVRLDDEQSRLCAREDVCLNGGVCSVLNDQAVCDCSQTGFRGKDCSEEDNYVEGLAHLMMGDQGKSKGKEEYIATFKGSEYFCYDLSQNPIQSSSDEITLSFKTLQRNGLMLHTGKSADYVNLALKNGAVSLVINLGSGAFEALVEPVNGKFNDNAWHDVKVTRNLRQHSGIGHAMVNKLHCSVTISVDGILTTTGYTQEDYTMLGSDDFFYVGGSPSTADLPGSPVSNNFMGCLKEVVYKNNDVRLELSRLAKQGDPKMKIHGVVAFKCENVATLDPITFETPESFISLPKWNAKKTGSISFDFRTTEPNGLILFSHGKPRHQKDAKHPQMVKVDFFAIEMLDGHLYLLLDMGSGTIKIKALQKKVNDGEWYHVDFQRDGRSGTISVNTLRTPYTAPGESEILDLDDDLYLGGLPENKAGLVFPTEVWTALLNYGYVGCIRDLFIDGQSKDIRQMAEIQSTAGVKPSCSRETAKPCLSNPCKNNGVCRDGWNRYVCDCSGTGYLGRSCEREATILSYDGSMFMKIQLPVVMHTEAEDVSLRFRSQRAYGILMATTSRESADTLRLELDAGRVKLTVNLDCIRINCNSSKGPETLFAGYNLNDNEWHTVRVVRRGKSLKLMVDDQQAMTGQMAGDHTRLEFHNIETGIITERRYLSSVPSNFIGHLQSLTFNGMAYIDLCKNGDIDYCELNARFGFRNIIADPVTFKTKASYVALATLQAYTSMHLFFQFKTTSLDGLILYNSGDGNDFIVVELVKGYLHYVFDLGNGANLIKGSSNKPLNDNQWHNVMISRDTNNLHTVKIDTKITTQSTAGARNLDLKSDLYIGGVAKEMYKSLPKLVHAKEGFQGCLASVDLNGRLPDLISDALFCNGQIERGCEGPSTTCQEDSCANQGVCLQQWDGFSCDCSMTSFSGPLCNDPGTTYIFSKGGGQITYTWPPNDRPSTRADRLAIGFSTVQKEAVLVRVDSSTGLGDYLELHIHQGKIGVKFNVGTDDIAIEEINAIINDGKYHVVRFTRSGGNATLQVDNWPVIERYPAGNNDNERLAIARQRIPYRLGRVVDEWLLDKGRQLTIFNSQATIKIGGKERGHPFQGQLSGLYYNGLKVLNMAAENDANIVIEGNVRLVGEVPSSMTTESTATAMQSEMSTSVMETTTTLATSTARRGKAPTKEPIGQTTDDILVASAECPSDDEDIDPCEPSSGGLANPTRAGGGREYPGSSEVIRESSSTTGMVVGIVAAAALCILILLYAMYKYRNRDEGSYHVDESRNYISNSAQSNGAVIKEKQPNSAKSSNKNKKNKDKEYYV.

At 1–1287 the chain is on the extracellular side; sequence SKRRDMTVFS…EVIRESSSTT (1287 aa). N49 is a glycosylation site (N-linked (GlcNAc...) asparagine). Residues 67–105 form the EGF-like 1 domain; it reads QSRLCAREDVCLNGGVCSVLNDQAVCDCSQTGFRGKDCS. 3 disulfides stabilise this stretch: C71-C83, C77-C92, and C94-C104. 2 consecutive Laminin G-like domains span residues 132 to 329 and 336 to 528; these read IATF…AFKC and DPIT…KPSC. Residues D178, L195, and M263 each coordinate Ca(2+). Intrachain disulfides connect C293-C329, C499-C528, C536-C547, C541-C556, and C558-C568. An EGF-like 2 domain is found at 532-569; it reads TAKPCLSNPCKNNGVCRDGWNRYVCDCSGTGYLGRSCE. Laminin G-like domains follow at residues 574-747 and 761-936; these read ILSY…IDYC and DPVT…ERGC. A glycan (N-linked (GlcNAc...) asparagine) is linked at N646. 4 disulfide bridges follow: C908/C936, C943/C954, C948/C963, and C965/C975. The EGF-like 3 domain maps to 939–976; sequence PSTTCQEDSCANQGVCLQQWDGFSCDCSMTSFSGPLCN. The Laminin G-like 5 domain occupies 982–1180; that stretch reads YIFSKGGGQI…DANIVIEGNV (199 aa). The N-linked (GlcNAc...) asparagine glycan is linked to N1079. Residues 1244-1280 form a disordered region; the sequence is CPSDDEDIDPCEPSSGGLANPTRAGGGREYPGSSEVI. Residues 1288 to 1308 form a helical membrane-spanning segment; that stretch reads GMVVGIVAAAALCILILLYAM. At 1309–1363 the chain is on the cytoplasmic side; sequence YKYRNRDEGSYHVDESRNYISNSAQSNGAVIKEKQPNSAKSSNKNKKNKDKEYYV. Residues 1330–1363 form a disordered region; sequence NSAQSNGAVIKEKQPNSAKSSNKNKKNKDKEYYV.

The protein belongs to the neurexin family. In terms of assembly, the cytoplasmic C-terminal region binds to CASK. The laminin G-like domain 1 binds to NXPH1. Specific isoforms bind to alpha-dystroglycan and to alpha-latrotoxin. N- and O-glycosylated.

The protein resides in the membrane. Neuronal cell surface protein that may be involved in cell recognition and cell adhesion. May mediate intracellular signaling. This is Neurexin-1 (NRXN1) from Gallus gallus (Chicken).